Reading from the N-terminus, the 184-residue chain is Photosystem I assembly protein Ycf4 (184 aa).

2 helical membrane-spanning segments follow: residues Trp24–Ile44 and Ile57–Ser77.

Belongs to the Ycf4 family.

The protein localises to the plastid. It is found in the chloroplast thylakoid membrane. Its function is as follows. Seems to be required for the assembly of the photosystem I complex. The polypeptide is Photosystem I assembly protein Ycf4 (Buxus microphylla (Littleleaf boxwood)).